Consider the following 58-residue polypeptide: Gigasin-4 (58 aa).

In terms of tissue distribution, component of the organic matrix of calcified shell layers.

The polypeptide is Gigasin-4 (Magallana gigas (Pacific oyster)).